Here is a 690-residue protein sequence, read N- to C-terminus: Elongation factor G (690 aa).

One can recognise a tr-type G domain in the interval E8–L283. Residues A17 to T24, D81 to H85, and N135 to D138 contribute to the GTP site.

This sequence belongs to the TRAFAC class translation factor GTPase superfamily. Classic translation factor GTPase family. EF-G/EF-2 subfamily.

It localises to the cytoplasm. Catalyzes the GTP-dependent ribosomal translocation step during translation elongation. During this step, the ribosome changes from the pre-translocational (PRE) to the post-translocational (POST) state as the newly formed A-site-bound peptidyl-tRNA and P-site-bound deacylated tRNA move to the P and E sites, respectively. Catalyzes the coordinated movement of the two tRNA molecules, the mRNA and conformational changes in the ribosome. In Rhodopseudomonas palustris (strain ATCC BAA-98 / CGA009), this protein is Elongation factor G.